A 397-amino-acid chain; its full sequence is Leucine carboxyl methyltransferase 1 (397 aa).

The disordered stretch occupies residues 17 to 61; it reads AIQTPPPTDPNAAPAHRPAPRPALGRCRPPHRRRRRLRPPVRPPL. The span at 26–43 shows a compositional bias: low complexity; the sequence is PNAAPAHRPAPRPALGRC. The span at 44–55 shows a compositional bias: basic residues; the sequence is RPPHRRRRRLRP. Residues R119, G142, D168, 224–225, and E259 each bind S-adenosyl-L-methionine; that span reads DL.

The protein belongs to the methyltransferase superfamily. LCMT family.

The catalysed reaction is [phosphatase 2A protein]-C-terminal L-leucine + S-adenosyl-L-methionine = [phosphatase 2A protein]-C-terminal L-leucine methyl ester + S-adenosyl-L-homocysteine. Functionally, methylates the carboxyl group of the C-terminal leucine residue of protein phosphatase 2A catalytic subunits to form alpha-leucine ester residues. This chain is Leucine carboxyl methyltransferase 1 (PPM1), found in Cryptococcus neoformans var. neoformans serotype D (strain B-3501A) (Filobasidiella neoformans).